We begin with the raw amino-acid sequence, 300 residues long: Mycothiol acetyltransferase (300 aa).

2 N-acetyltransferase domains span residues 4–140 and 151–300; these read IDWR…RPLT and VRLA…AVAD. Asp36 contributes to the 1D-myo-inositol 2-(L-cysteinylamino)-2-deoxy-alpha-D-glucopyranoside binding site. Position 79–81 (79–81) interacts with acetyl-CoA; the sequence is LVV. 3 residues coordinate 1D-myo-inositol 2-(L-cysteinylamino)-2-deoxy-alpha-D-glucopyranoside: Glu178, Lys219, and Glu227. 231–233 contacts acetyl-CoA; sequence VGV. Tyr269 contacts 1D-myo-inositol 2-(L-cysteinylamino)-2-deoxy-alpha-D-glucopyranoside. 274–279 provides a ligand contact to acetyl-CoA; it reads NGAAVK.

The protein belongs to the acetyltransferase family. MshD subfamily. In terms of assembly, monomer.

It catalyses the reaction 1D-myo-inositol 2-(L-cysteinylamino)-2-deoxy-alpha-D-glucopyranoside + acetyl-CoA = mycothiol + CoA + H(+). Functionally, catalyzes the transfer of acetyl from acetyl-CoA to desacetylmycothiol (Cys-GlcN-Ins) to form mycothiol. The protein is Mycothiol acetyltransferase of Mycobacterium sp. (strain JLS).